The following is an 84-amino-acid chain: Toxin Tb1 (84 aa).

Residues 1 to 20 form the signal peptide; the sequence is MKGMILFISCLLLIGIVVEC. Residues 21 to 82 enclose the LCN-type CS-alpha/beta domain; sequence KEGYLMDHEG…VWDRATNKCG (62 aa). 4 disulfide bridges follow: Cys-31-Cys-81, Cys-35-Cys-57, Cys-43-Cys-62, and Cys-47-Cys-64. Cys-81 carries the post-translational modification Cysteine amide.

This sequence belongs to the long (4 C-C) scorpion toxin superfamily. Sodium channel inhibitor family. Beta subfamily. As to expression, expressed by the venom gland.

The protein resides in the secreted. Functionally, beta toxins bind voltage-independently at site-4 of sodium channels (Nav) and shift the voltage of activation toward more negative potentials thereby affecting sodium channel activation and promoting spontaneous and repetitive firing. Is lethal to mice. The sequence is that of Toxin Tb1 from Tityus bahiensis (Brazilian scorpion).